Consider the following 314-residue polypeptide: TPR repeat-containing protein MJ1345 (314 aa).

TPR repeat units follow at residues 12–45 (ESIL…RESP), 46–78 (DVYV…KPKY), 80–112 (LANF…EKSD), 114–146 (PVKY…YPKS), 147–180 (AIAW…NPKD), 182–214 (QSLL…NNKD), 215–248 (IRAL…NPDD), 249–282 (PLLY…NPNI), and 284–313 (DAWN…LDIY).

The polypeptide is TPR repeat-containing protein MJ1345 (Methanocaldococcus jannaschii (strain ATCC 43067 / DSM 2661 / JAL-1 / JCM 10045 / NBRC 100440) (Methanococcus jannaschii)).